Consider the following 157-residue polypeptide: MAREVKLTKAGYERLMKQLEQERERLQEATKILQELMESSDDYDDSGLEAAKQEKARIEARIDSLEDVLSRAVILEEGTGEVIGLGSVVELEDPATGERLSVQVVSPAEASVLENPMKISDASPMGKALLGHRVGDVLSLDTPKGKKEFRVVAIHGR.

The stretch at Met-1–Ile-74 forms a coiled coil.

This sequence belongs to the GreA/GreB family. Interacts with RNAP.

In terms of biological role, inhibits all catalytic activities of RNA polymerase (RNAP) by partially occluding its substrate-binding site and preventing NTP binding. The protein is Transcription inhibitor protein Gfh1 (gfh1) of Thermus aquaticus.